The chain runs to 443 residues: Probable D-serine dehydratase (443 aa).

K116 carries the N6-(pyridoxal phosphate)lysine modification.

It belongs to the serine/threonine dehydratase family. DsdA subfamily. Pyridoxal 5'-phosphate serves as cofactor.

It catalyses the reaction D-serine = pyruvate + NH4(+). The chain is Probable D-serine dehydratase from Bacillus cereus (strain B4264).